Consider the following 301-residue polypeptide: tRNA pseudouridine synthase B (301 aa).

Aspartate 45 acts as the Nucleophile in catalysis.

The protein belongs to the pseudouridine synthase TruB family. Type 1 subfamily.

The catalysed reaction is uridine(55) in tRNA = pseudouridine(55) in tRNA. In terms of biological role, responsible for synthesis of pseudouridine from uracil-55 in the psi GC loop of transfer RNAs. The polypeptide is tRNA pseudouridine synthase B (Streptomyces avermitilis (strain ATCC 31267 / DSM 46492 / JCM 5070 / NBRC 14893 / NCIMB 12804 / NRRL 8165 / MA-4680)).